The primary structure comprises 864 residues: Paramyosin (864 aa).

Residues Met-1–Pro-30 form a nonhelical region region. Positions Ser-31 to Ser-853 form a coiled coil. Positions Val-854–Val-864 are nonhelical region.

This sequence belongs to the paramyosin family. In terms of assembly, homodimer. Post-translationally, phosphorylated. Most abundantly expressed in muscle tissues from byssus retractor and adductor muscles. Low expression in foot, gill, inner mantle and outer mantle.

It is found in the cytoplasm. It localises to the myofibril. Its function is as follows. Paramyosin is a major structural component of many thick filaments isolated from invertebrate muscles. This chain is Paramyosin, found in Mytilus galloprovincialis (Mediterranean mussel).